A 377-amino-acid polypeptide reads, in one-letter code: Dihydroorotate dehydrogenase (quinone) (377 aa).

FMN contacts are provided by residues 78 to 82 (AGCDK) and Ala-102. Residue Lys-82 participates in substrate binding. 127 to 130 (NRLG) is a binding site for substrate. FMN contacts are provided by Asn-159 and Asn-192. Asn-192 contributes to the substrate binding site. The active-site Nucleophile is the Ser-195. A substrate-binding site is contributed by Asn-197. 2 residues coordinate FMN: Lys-230 and Thr-258. 259–260 (NT) provides a ligand contact to substrate. FMN-binding positions include Gly-288, Gly-317, and 338–339 (YT).

The protein belongs to the dihydroorotate dehydrogenase family. Type 2 subfamily. In terms of assembly, monomer. The cofactor is FMN.

The protein localises to the cell membrane. It catalyses the reaction (S)-dihydroorotate + a quinone = orotate + a quinol. Its pathway is pyrimidine metabolism; UMP biosynthesis via de novo pathway; orotate from (S)-dihydroorotate (quinone route): step 1/1. In terms of biological role, catalyzes the conversion of dihydroorotate to orotate with quinone as electron acceptor. The polypeptide is Dihydroorotate dehydrogenase (quinone) (Rippkaea orientalis (strain PCC 8801 / RF-1) (Cyanothece sp. (strain PCC 8801))).